Consider the following 64-residue polypeptide: Prokaryotic ubiquitin-like protein Pup (64 aa).

A disordered region spans residues 1 to 37 (MAQEQTKRGGGGGEDDDLSGGAGAGQERREKLAEETD). The tract at residues 21-58 (GAGAGQERREKLAEETDDLLDEIDDVLEENAEDFVRAY) is ARC ATPase binding. Residues 24–52 (AGQERREKLAEETDDLLDEIDDVLEENAE) are a coiled coil. Gln-64 bears the Deamidated glutamine mark. Residue Gln-64 forms an Isoglutamyl lysine isopeptide (Gln-Lys) (interchain with K-? in acceptor proteins) linkage.

Belongs to the prokaryotic ubiquitin-like protein family. In terms of assembly, strongly interacts with the proteasome-associated ATPase ARC through a hydrophobic interface; the interacting region of Pup lies in its C-terminal half. There is one Pup binding site per ARC hexamer ring. In terms of processing, is modified by deamidation of its C-terminal glutamine to glutamate by the deamidase Dop, a prerequisite to the subsequent pupylation process.

It participates in protein degradation; proteasomal Pup-dependent pathway. In terms of biological role, protein modifier that is covalently attached to lysine residues of substrate proteins, thereby targeting them for proteasomal degradation. The tagging system is termed pupylation. The chain is Prokaryotic ubiquitin-like protein Pup from Mycobacterium sp. (strain JLS).